We begin with the raw amino-acid sequence, 131 residues long: Large ribosomal subunit protein eL32 (131 aa).

It belongs to the eukaryotic ribosomal protein eL32 family.

This Eremothecium gossypii (strain ATCC 10895 / CBS 109.51 / FGSC 9923 / NRRL Y-1056) (Yeast) protein is Large ribosomal subunit protein eL32 (RPL32).